The sequence spans 264 residues: uncharacterized protein (264 aa).

A signal peptide spans 1-22 (MKRKLTICLLIALIFYNGNAKA). The helical transmembrane segment at 227-247 (LLWVIITTGSIIITALTYVGY) threads the bilayer.

The protein localises to the membrane. This is an uncharacterized protein from Bacillus subtilis (strain 168).